Here is a 425-residue protein sequence, read N- to C-terminus: Glutamyl-tRNA reductase (425 aa).

Residues 49-52 (TCNR), serine 107, 112-114 (EPQ), and glutamine 118 contribute to the substrate site. The active-site Nucleophile is cysteine 50. NADP(+) is bound at residue 187-192 (GAGETI).

Belongs to the glutamyl-tRNA reductase family. As to quaternary structure, homodimer.

The catalysed reaction is (S)-4-amino-5-oxopentanoate + tRNA(Glu) + NADP(+) = L-glutamyl-tRNA(Glu) + NADPH + H(+). Its pathway is porphyrin-containing compound metabolism; protoporphyrin-IX biosynthesis; 5-aminolevulinate from L-glutamyl-tRNA(Glu): step 1/2. In terms of biological role, catalyzes the NADPH-dependent reduction of glutamyl-tRNA(Glu) to glutamate 1-semialdehyde (GSA). This is Glutamyl-tRNA reductase from Pseudomonas putida (strain ATCC 47054 / DSM 6125 / CFBP 8728 / NCIMB 11950 / KT2440).